The following is a 295-amino-acid chain: 4-diphosphocytidyl-2-C-methyl-D-erythritol kinase (295 aa).

The active site involves K22. 106–116 (PAGGGFGGGSS) serves as a coordination point for ATP. D148 is an active-site residue.

This sequence belongs to the GHMP kinase family. IspE subfamily.

It catalyses the reaction 4-CDP-2-C-methyl-D-erythritol + ATP = 4-CDP-2-C-methyl-D-erythritol 2-phosphate + ADP + H(+). It functions in the pathway isoprenoid biosynthesis; isopentenyl diphosphate biosynthesis via DXP pathway; isopentenyl diphosphate from 1-deoxy-D-xylulose 5-phosphate: step 3/6. Its function is as follows. Catalyzes the phosphorylation of the position 2 hydroxy group of 4-diphosphocytidyl-2C-methyl-D-erythritol. This chain is 4-diphosphocytidyl-2-C-methyl-D-erythritol kinase, found in Xanthomonas axonopodis pv. citri (strain 306).